The chain runs to 219 residues: KP6 killer toxin (219 aa).

The first 19 residues, 1–19 (MLIFSVLMYLGLLLAGASA), serve as a signal peptide directing secretion. A propeptide spanning residues 20 to 27 (LPNGLSPR) is cleaved from the precursor. Intrachain disulfides connect C32–C39, C43–C101, C45–C92, and C62–C78. N98 carries N-linked (GlcNAc...) asparagine; by host glycosylation. The propeptide occupies 106–138 (KRTIQDSATDTVDLGAELHRDDPPPTASDIGKR). The tract at residues 120–142 (GAELHRDDPPPTASDIGKRGKRP) is disordered.

As to quaternary structure, heterodimer of two small polypeptides that are not covalently linked.

The protein localises to the secreted. Its function is as follows. This protein is lethal to sensitive cells of the same or related species. The KP6 alpha subunit is known to recognize some cellular receptors before interaction of the complex with KP6 beta, precipitating cell death. This Ustilago maydis P6 virus (UmV6) protein is KP6 killer toxin.